The following is a 182-amino-acid chain: MFKYIGDIVKGTGTQLRSLVMVFGHGFRKRDTLQYPEEPVYLPPRYRGRIVLTRDPDGEERCVACNLCAVACPVGCISLQKAETEDGRWYPDFFRINFSRCIFCGLCEEACPTTAIQLTPDFEMAEFKRQDLVYEKEDLLISGPGKNPDYNFYRVAGMAIAGKPKGSAQNEAEPINVKSLLP.

2 4Fe-4S ferredoxin-type domains span residues 52–82 (LTRDPDGEERCVACNLCAVACPVGCISLQKA) and 92–121 (DFFRINFSRCIFCGLCEEACPTTAIQLTPD). [4Fe-4S] cluster is bound by residues Cys62, Cys65, Cys68, Cys72, Cys101, Cys104, Cys107, and Cys111.

The protein belongs to the complex I 23 kDa subunit family. NDH-1 is composed of 13 different subunits. Subunits NuoA, H, J, K, L, M, N constitute the membrane sector of the complex. The cofactor is [4Fe-4S] cluster.

It is found in the cell inner membrane. The catalysed reaction is a quinone + NADH + 5 H(+)(in) = a quinol + NAD(+) + 4 H(+)(out). Its function is as follows. NDH-1 shuttles electrons from NADH, via FMN and iron-sulfur (Fe-S) centers, to quinones in the respiratory chain. The immediate electron acceptor for the enzyme in this species is believed to be ubiquinone. Couples the redox reaction to proton translocation (for every two electrons transferred, four hydrogen ions are translocated across the cytoplasmic membrane), and thus conserves the redox energy in a proton gradient. The protein is NADH-quinone oxidoreductase subunit I of Pseudomonas fluorescens (strain ATCC BAA-477 / NRRL B-23932 / Pf-5).